We begin with the raw amino-acid sequence, 271 residues long: DNA-directed RNA polymerase subunit Rpo3 (271 aa).

This sequence belongs to the archaeal Rpo3/eukaryotic RPB3 RNA polymerase subunit family. In terms of assembly, part of the RNA polymerase complex.

Its subcellular location is the cytoplasm. The catalysed reaction is RNA(n) + a ribonucleoside 5'-triphosphate = RNA(n+1) + diphosphate. Functionally, DNA-dependent RNA polymerase (RNAP) catalyzes the transcription of DNA into RNA using the four ribonucleoside triphosphates as substrates. In Picrophilus torridus (strain ATCC 700027 / DSM 9790 / JCM 10055 / NBRC 100828 / KAW 2/3), this protein is DNA-directed RNA polymerase subunit Rpo3.